Reading from the N-terminus, the 196-residue chain is MIPVVIEQTSRGEASYDIYSRLLKDRIIMLTGPVEDNMANSIIAQLLFLDAQDNTKDIYLYVNTPGGSVSAGLAIVDTMNFIKSDVQTIVMGMAASMGTVIASSGTKGKRFMLPNAEYMIHQPMGGTGGGTQQTDMAIAAEHLLKTRNNLEQILADNSGQPIEKVHVDAERDNWMSAQETLEYGFIDEIMANNQLK.

S96 acts as the Nucleophile in catalysis. H121 is a catalytic residue.

Belongs to the peptidase S14 family. As to quaternary structure, fourteen ClpP subunits assemble into 2 heptameric rings which stack back to back to give a disk-like structure with a central cavity, resembling the structure of eukaryotic proteasomes.

The protein resides in the cytoplasm. It carries out the reaction Hydrolysis of proteins to small peptides in the presence of ATP and magnesium. alpha-casein is the usual test substrate. In the absence of ATP, only oligopeptides shorter than five residues are hydrolyzed (such as succinyl-Leu-Tyr-|-NHMec, and Leu-Tyr-Leu-|-Tyr-Trp, in which cleavage of the -Tyr-|-Leu- and -Tyr-|-Trp bonds also occurs).. Cleaves peptides in various proteins in a process that requires ATP hydrolysis. Has a chymotrypsin-like activity. Plays a major role in the degradation of misfolded proteins. This is ATP-dependent Clp protease proteolytic subunit from Streptococcus salivarius.